Reading from the N-terminus, the 640-residue chain is ATP-dependent rRNA helicase spb4 (640 aa).

The short motif at 14–42 (WDAVTPALSEWVLEAMSSMGFTRMTPVQA) is the Q motif element. The Helicase ATP-binding domain maps to 45–249 (IPLFMAHKDV…RVGLRNPVKV (205 aa)). 58 to 65 (AVTGSGKT) lines the ATP pocket. The DEAD box signature appears at 197-200 (DEAD). The 155-residue stretch at 283–437 (ALKRIVSSVQ…SISFSDADAA (155 aa)) folds into the Helicase C-terminal domain. A coiled-coil region spans residues 521-629 (AYKDKQREKR…VAKAAGAKAD (109 aa)). Disordered regions lie at residues 531-593 (RKEL…EEEK) and 607-640 (RKKN…QGFD). Over residues 577–593 (KSKQEKARWEKMTEEEK) the composition is skewed to basic and acidic residues. Positions 630-640 (GDDEEEFQGFD) are enriched in acidic residues.

Belongs to the DEAD box helicase family. DDX55/SPB4 subfamily. In terms of assembly, component of pre-60S ribosomal complexes.

The protein resides in the nucleus. It localises to the nucleolus. It catalyses the reaction ATP + H2O = ADP + phosphate + H(+). Its function is as follows. ATP-binding RNA helicase involved in the biogenesis of 60S ribosomal subunits. Binds 90S pre-ribosomal particles and dissociates from pre-60S ribosomal particles after processing of 27SB pre-rRNA. Required for the normal formation of 18S rRNA through the processing of pre-rRNAs at sites A0, A1 and A2, and the normal formation of 25S and 5.8S rRNAs through the processing of pre-rRNAs at sites C1 and C2. The sequence is that of ATP-dependent rRNA helicase spb4 from Aspergillus fumigatus (strain ATCC MYA-4609 / CBS 101355 / FGSC A1100 / Af293) (Neosartorya fumigata).